The primary structure comprises 224 residues: Phosphoglycolate phosphatase (224 aa).

Asp11 acts as the Nucleophile in catalysis. Mg(2+) contacts are provided by Asp11, Asp13, and Asp177.

This sequence belongs to the HAD-like hydrolase superfamily. CbbY/CbbZ/Gph/YieH family. Mg(2+) is required as a cofactor.

The enzyme catalyses 2-phosphoglycolate + H2O = glycolate + phosphate. The protein operates within organic acid metabolism; glycolate biosynthesis; glycolate from 2-phosphoglycolate: step 1/1. In terms of biological role, specifically catalyzes the dephosphorylation of 2-phosphoglycolate. Is involved in the dissimilation of the intracellular 2-phosphoglycolate formed during the DNA repair of 3'-phosphoglycolate ends, a major class of DNA lesions induced by oxidative stress. The polypeptide is Phosphoglycolate phosphatase (Haemophilus influenzae (strain 86-028NP)).